Reading from the N-terminus, the 453-residue chain is Ankyrin repeat and SOCS box protein 16 (453 aa).

7 ANK repeats span residues 56–85 (CRDPAVHQALFSGNLQQVQALFQDEEAANM), 110–139 (KQTAPLAIATARGYTDCARHLIRQGAELDA), 142–171 (GGRAALHEACARAQFDCVRLLLTFGAKANV), 175–204 (EGTTPLHLCTIPESLQCAKLLLEAGATVNL), 209–238 (SQETPLHVAAARGLEQHVALYLEHGADVGL), 242–279 (QGETALNTACAGAEGPGSCRRHQAAARRLLEAGADARA), and 283–312 (KRHTPLHNACANGCGGLAELLLRYGARAEV). The 53-residue stretch at 398–450 (YSSALCMVNQPRQLQHLARLAVRARLGSRCRQGATRLPLPPLLRDYLLLRVEG) folds into the SOCS box domain.

This sequence belongs to the ankyrin SOCS box (ASB) family.

It functions in the pathway protein modification; protein ubiquitination. May be a substrate-recognition component of a SCF-like ECS (Elongin-Cullin-SOCS-box protein) E3 ubiquitin-protein ligase complex which mediates the ubiquitination and subsequent proteasomal degradation of target proteins. The protein is Ankyrin repeat and SOCS box protein 16 (ASB16) of Homo sapiens (Human).